The chain runs to 346 residues: tRNA N6-adenosine threonylcarbamoyltransferase (346 aa).

Residues histidine 111 and histidine 115 each coordinate Fe cation. Substrate-binding positions include leucine 134–glycine 138, aspartate 167, glycine 180, and asparagine 279. Aspartate 307 lines the Fe cation pocket.

The protein belongs to the KAE1 / TsaD family. It depends on Fe(2+) as a cofactor.

The protein localises to the cytoplasm. The enzyme catalyses L-threonylcarbamoyladenylate + adenosine(37) in tRNA = N(6)-L-threonylcarbamoyladenosine(37) in tRNA + AMP + H(+). In terms of biological role, required for the formation of a threonylcarbamoyl group on adenosine at position 37 (t(6)A37) in tRNAs that read codons beginning with adenine. Is involved in the transfer of the threonylcarbamoyl moiety of threonylcarbamoyl-AMP (TC-AMP) to the N6 group of A37, together with TsaE and TsaB. TsaD likely plays a direct catalytic role in this reaction. This Burkholderia vietnamiensis (strain G4 / LMG 22486) (Burkholderia cepacia (strain R1808)) protein is tRNA N6-adenosine threonylcarbamoyltransferase.